A 719-amino-acid polypeptide reads, in one-letter code: Aminodeoxychorismate synthase (719 aa).

The region spanning 5–199 (RTLLIDNYDS…RDLSLRAAGH (195 aa)) is the Glutamine amidotransferase type-1 domain. The active-site Nucleophile is cysteine 86. Active-site residues include histidine 173 and glutamate 175. The disordered stretch occupies residues 199 to 224 (HRPPHTERIPAPAPAPAPAPAPAPPA). Residues 209–224 (APAPAPAPAPAPAPPA) show a composition bias toward pro residues.

In the C-terminal section; belongs to the anthranilate synthase component I family.

It carries out the reaction chorismate + L-glutamine = 4-amino-4-deoxychorismate + L-glutamate. It functions in the pathway antibiotic biosynthesis. Functionally, involved in pristinamycin I biosynthesis. Catalyzes the biosynthesis of 4-amino-4-deoxychorismate (ADC) from chorismate and glutamine. The sequence is that of Aminodeoxychorismate synthase from Streptomyces pristinaespiralis.